Reading from the N-terminus, the 91-residue chain is Small ribosomal subunit protein uS19 (91 aa).

This sequence belongs to the universal ribosomal protein uS19 family.

Functionally, protein S19 forms a complex with S13 that binds strongly to the 16S ribosomal RNA. The chain is Small ribosomal subunit protein uS19 from Ectopseudomonas mendocina (strain ymp) (Pseudomonas mendocina).